Reading from the N-terminus, the 150-residue chain is Dual specificity protein phosphatase 23 (150 aa).

The region spanning 7–150 (NFSWVLPGRL…AVFQFYQRTK (144 aa)) is the Tyrosine-protein phosphatase domain. Cysteine 95 acts as the Phosphocysteine intermediate in catalysis.

The protein belongs to the protein-tyrosine phosphatase family. Non-receptor class dual specificity subfamily. In terms of tissue distribution, widely expressed.

It is found in the cytoplasm. Its subcellular location is the cytosol. The protein resides in the nucleus. It carries out the reaction O-phospho-L-tyrosyl-[protein] + H2O = L-tyrosyl-[protein] + phosphate. The catalysed reaction is O-phospho-L-seryl-[protein] + H2O = L-seryl-[protein] + phosphate. It catalyses the reaction O-phospho-L-threonyl-[protein] + H2O = L-threonyl-[protein] + phosphate. Its function is as follows. Protein phosphatase that mediates dephosphorylation of proteins phosphorylated on Tyr and Ser/Thr residues. In vitro, it can dephosphorylate p44-ERK1 (MAPK3) but not p54 SAPK-beta (MAPK10) in vitro. Able to enhance activation of JNK and p38 (MAPK14). The chain is Dual specificity protein phosphatase 23 (Dusp23) from Mus musculus (Mouse).